Reading from the N-terminus, the 548-residue chain is MAAKDVKFGNDARVKMLEGVNVLADAVKVTLGPKGRNVVLDKSFGAPTITKDGVSVAREIELEDKFQNMGAQMVKEVASKANDAAGDGTTTATVLAQAIVNEGLKAVAAGMNPMDLKRGIDKAVIAAVEQPKRASVECTDTKAIAQVGTISANSDSSVGNIIAEAMEKVGRDGVITVEEGQALQDELDVVEGMQFDRGYLSPYFINNQEAGSVDLENPFILLIDKKVSNIRELLPALEAVAKASRPLLIIAEDVEGEALATLVVNNMRGIVKVAAVKAPGFGDRRKAMLQDIAILTGGIVISEEVGLELEKVALEDLGQAKRVAITKENTTIIDGVGEEAMIQGRVAQIRQQIEDATSDYDKEKLQERVAKLAGGVAVIKVGAATEVEMKEKKDRVEDALHATRAAVEEGVVAGGGVALIRAASKIVDLEGDNEEQNVGIRVALRAMEAPIRQITKNAGDEESVVANNVKAGEGSYGYNAATGEYGDMLEMGILDPTKVTRSALQFAASVAGLMITTEAMVTDLPQKEGAGMPDMGGMGGMGGMGGMM.

Residues 30 to 33 (TLGP), K51, 87 to 91 (DGTTT), G415, 479 to 481 (NAA), and D495 each bind ATP.

Belongs to the chaperonin (HSP60) family. In terms of assembly, forms a cylinder of 14 subunits composed of two heptameric rings stacked back-to-back. Interacts with the co-chaperonin GroES.

It localises to the cytoplasm. It catalyses the reaction ATP + H2O + a folded polypeptide = ADP + phosphate + an unfolded polypeptide.. Its function is as follows. Together with its co-chaperonin GroES, plays an essential role in assisting protein folding. The GroEL-GroES system forms a nano-cage that allows encapsulation of the non-native substrate proteins and provides a physical environment optimized to promote and accelerate protein folding. The chain is Chaperonin GroEL 1 from Vibrio harveyi (Beneckea harveyi).